A 499-amino-acid chain; its full sequence is Histidine ammonia-lyase (499 aa).

A cross-link (5-imidazolinone (Ala-Gly)) is located at residues 142–144 (ASG). A 2,3-didehydroalanine (Ser) modification is found at Ser143.

This sequence belongs to the PAL/histidase family. In terms of processing, contains an active site 4-methylidene-imidazol-5-one (MIO), which is formed autocatalytically by cyclization and dehydration of residues Ala-Ser-Gly.

Its subcellular location is the cytoplasm. The enzyme catalyses L-histidine = trans-urocanate + NH4(+). It participates in amino-acid degradation; L-histidine degradation into L-glutamate; N-formimidoyl-L-glutamate from L-histidine: step 1/3. The sequence is that of Histidine ammonia-lyase from Staphylococcus saprophyticus subsp. saprophyticus (strain ATCC 15305 / DSM 20229 / NCIMB 8711 / NCTC 7292 / S-41).